The primary structure comprises 698 residues: DNA ligase (698 aa).

NAD(+) is bound by residues 35-39 (DSVYD), 84-85 (SL), and Glu-123. Lys-125 (N6-AMP-lysine intermediate) is an active-site residue. Residues Arg-146, Glu-183, Lys-302, and Lys-326 each contribute to the NAD(+) site. Positions 420, 423, 438, and 443 each coordinate Zn(2+). The BRCT domain occupies 612-698 (NGKGHLNGQT…QNSADTIHLL (87 aa)).

Belongs to the NAD-dependent DNA ligase family. LigA subfamily. Mg(2+) serves as cofactor. Mn(2+) is required as a cofactor.

The catalysed reaction is NAD(+) + (deoxyribonucleotide)n-3'-hydroxyl + 5'-phospho-(deoxyribonucleotide)m = (deoxyribonucleotide)n+m + AMP + beta-nicotinamide D-nucleotide.. In terms of biological role, DNA ligase that catalyzes the formation of phosphodiester linkages between 5'-phosphoryl and 3'-hydroxyl groups in double-stranded DNA using NAD as a coenzyme and as the energy source for the reaction. It is essential for DNA replication and repair of damaged DNA. The protein is DNA ligase of Synechococcus sp. (strain WH7803).